The sequence spans 292 residues: ATP synthase subunit a (292 aa).

A run of 7 helical transmembrane segments spans residues 39–59 (QILG…FYKL), 73–93 (FLLL…DLLG), 102–122 (YFLM…LGGI), 128–148 (SLTF…VMGI), 172–192 (TFIP…SISL), 196–216 (GNIL…IFIF), and 231–251 (VFAG…AGVL).

The protein belongs to the ATPase A chain family. As to quaternary structure, F-type ATPases have 2 components, CF(1) - the catalytic core - and CF(0) - the membrane proton channel. CF(1) has five subunits: alpha(3), beta(3), gamma(1), delta(1), epsilon(1). CF(0) has three main subunits: a(1), b(2) and c(9-12). The alpha and beta chains form an alternating ring which encloses part of the gamma chain. CF(1) is attached to CF(0) by a central stalk formed by the gamma and epsilon chains, while a peripheral stalk is formed by the delta and b chains.

The protein localises to the cell membrane. Functionally, key component of the proton channel; it plays a direct role in the translocation of protons across the membrane. The chain is ATP synthase subunit a from Mycoplasma genitalium (strain ATCC 33530 / DSM 19775 / NCTC 10195 / G37) (Mycoplasmoides genitalium).